Reading from the N-terminus, the 1311-residue chain is Mitogen-activated protein kinase kinase kinase 19 (1311 aa).

Disordered regions lie at residues 85–119 (PDPL…SPPD), 250–274 (PLSQ…PVEH), 330–363 (SVKE…YLSS), 396–472 (MTPA…NPEM), 486–508 (EGTS…PAQN), 576–607 (HRPH…KQAF), and 734–767 (SKDK…FLSS). A compositionally biased stretch (polar residues) spans 250–261 (PLSQSAEFSSSK). Composition is skewed to basic and acidic residues over residues 262–274 (NHQE…PVEH), 330–345 (SVKE…RDSG), and 450–464 (LEGH…KIPM). Positions 734–748 (SKDKGCKDMGGHTED) are enriched in basic and acidic residues. Positions 1044-1307 (WTKGEILGRG…ALQLLKHSFL (264 aa)) constitute a Protein kinase domain. Residues 1050–1058 (LGRGAYGTV) and Lys1072 each bind ATP. The active-site Proton acceptor is the Asp1169.

This sequence belongs to the protein kinase superfamily. STE Ser/Thr protein kinase family. STE20 subfamily.

The enzyme catalyses L-seryl-[protein] + ATP = O-phospho-L-seryl-[protein] + ADP + H(+). The catalysed reaction is L-threonyl-[protein] + ATP = O-phospho-L-threonyl-[protein] + ADP + H(+). The protein is Mitogen-activated protein kinase kinase kinase 19 (Map3k19) of Mus musculus (Mouse).